Consider the following 91-residue polypeptide: CRISPR-associated endoribonuclease Cas2 2 (91 aa).

A Mg(2+)-binding site is contributed by D8.

The protein belongs to the CRISPR-associated endoribonuclease Cas2 protein family. Homodimer, forms a heterotetramer with a Cas1 homodimer. It depends on Mg(2+) as a cofactor.

Functionally, CRISPR (clustered regularly interspaced short palindromic repeat), is an adaptive immune system that provides protection against mobile genetic elements (viruses, transposable elements and conjugative plasmids). CRISPR clusters contain sequences complementary to antecedent mobile elements and target invading nucleic acids. CRISPR clusters are transcribed and processed into CRISPR RNA (crRNA). Functions as a ssRNA-specific endoribonuclease. Involved in the integration of spacer DNA into the CRISPR cassette. The chain is CRISPR-associated endoribonuclease Cas2 2 from Pyrobaculum aerophilum (strain ATCC 51768 / DSM 7523 / JCM 9630 / CIP 104966 / NBRC 100827 / IM2).